A 196-amino-acid polypeptide reads, in one-letter code: ATP-dependent Clp protease proteolytic subunit (196 aa).

Residue serine 101 is the Nucleophile of the active site. Histidine 126 is a catalytic residue.

The protein belongs to the peptidase S14 family. As to quaternary structure, component of the chloroplastic Clp protease core complex.

The protein resides in the plastid. The protein localises to the chloroplast stroma. The enzyme catalyses Hydrolysis of proteins to small peptides in the presence of ATP and magnesium. alpha-casein is the usual test substrate. In the absence of ATP, only oligopeptides shorter than five residues are hydrolyzed (such as succinyl-Leu-Tyr-|-NHMec, and Leu-Tyr-Leu-|-Tyr-Trp, in which cleavage of the -Tyr-|-Leu- and -Tyr-|-Trp bonds also occurs).. Cleaves peptides in various proteins in a process that requires ATP hydrolysis. Has a chymotrypsin-like activity. Plays a major role in the degradation of misfolded proteins. The sequence is that of ATP-dependent Clp protease proteolytic subunit from Eucalyptus globulus subsp. globulus (Tasmanian blue gum).